The sequence spans 286 residues: Pyridoxal kinase PdxY (286 aa).

Ser8 is a substrate binding site. ATP is bound by residues Asp110 and Glu147. A substrate-binding site is contributed by Asp223.

Belongs to the pyridoxine kinase family. PdxY subfamily. Homodimer. It depends on Mg(2+) as a cofactor.

The catalysed reaction is pyridoxal + ATP = pyridoxal 5'-phosphate + ADP + H(+). Its pathway is cofactor metabolism; pyridoxal 5'-phosphate salvage; pyridoxal 5'-phosphate from pyridoxal: step 1/1. In terms of biological role, pyridoxal kinase involved in the salvage pathway of pyridoxal 5'-phosphate (PLP). Catalyzes the phosphorylation of pyridoxal to PLP. The sequence is that of Pyridoxal kinase PdxY from Granulibacter bethesdensis (strain ATCC BAA-1260 / CGDNIH1).